The primary structure comprises 168 residues: Phosphopantetheine adenylyltransferase (168 aa).

Residue Thr10 coordinates substrate. ATP-binding positions include 10–11 and His18; that span reads TF. Residues Lys42, Leu75, and Arg89 each contribute to the substrate site. ATP is bound by residues 90-92, Glu100, and 125-131; these read GVR and YTYVASS.

This sequence belongs to the bacterial CoaD family. As to quaternary structure, homohexamer. Mg(2+) is required as a cofactor.

Its subcellular location is the cytoplasm. It carries out the reaction (R)-4'-phosphopantetheine + ATP + H(+) = 3'-dephospho-CoA + diphosphate. It participates in cofactor biosynthesis; coenzyme A biosynthesis; CoA from (R)-pantothenate: step 4/5. Its function is as follows. Reversibly transfers an adenylyl group from ATP to 4'-phosphopantetheine, yielding dephospho-CoA (dPCoA) and pyrophosphate. The sequence is that of Phosphopantetheine adenylyltransferase from Prosthecochloris aestuarii (strain DSM 271 / SK 413).